A 440-amino-acid polypeptide reads, in one-letter code: Probable exopolygalacturonase B (440 aa).

A signal peptide spans 1–20 (MRLHFLPLVALCATTASSLA). Asn65, Asn190, and Asn230 each carry an N-linked (GlcNAc...) asparagine glycan. Asp260 functions as the Proton donor in the catalytic mechanism. Cys262 and Cys279 are oxidised to a cystine. N-linked (GlcNAc...) asparagine glycans are attached at residues Asn268 and Asn280. Residue His283 is part of the active site. N-linked (GlcNAc...) asparagine glycans are attached at residues Asn307, Asn334, and Asn371. A disulfide bridge connects residues Cys397 and Cys403. A glycan (N-linked (GlcNAc...) asparagine) is linked at Asn412.

This sequence belongs to the glycosyl hydrolase 28 family.

Its subcellular location is the secreted. It catalyses the reaction [(1-&gt;4)-alpha-D-galacturonosyl](n) + H2O = alpha-D-galacturonate + [(1-&gt;4)-alpha-D-galacturonosyl](n-1). In terms of biological role, specific in hydrolyzing the terminal glycosidic bond of polygalacturonic acid and oligogalacturonates. The protein is Probable exopolygalacturonase B (pgxB) of Emericella nidulans (strain FGSC A4 / ATCC 38163 / CBS 112.46 / NRRL 194 / M139) (Aspergillus nidulans).